The chain runs to 370 residues: Aminomethyltransferase (370 aa).

It belongs to the GcvT family. The glycine cleavage system is composed of four proteins: P, T, L and H.

It catalyses the reaction N(6)-[(R)-S(8)-aminomethyldihydrolipoyl]-L-lysyl-[protein] + (6S)-5,6,7,8-tetrahydrofolate = N(6)-[(R)-dihydrolipoyl]-L-lysyl-[protein] + (6R)-5,10-methylene-5,6,7,8-tetrahydrofolate + NH4(+). The glycine cleavage system catalyzes the degradation of glycine. The chain is Aminomethyltransferase from Prochlorococcus marinus (strain AS9601).